The primary structure comprises 2643 residues: BAH and coiled-coil domain-containing protein 1 (2643 aa).

Disordered regions lie at residues 23-45 (SAAAAARLAPAGPAAQPAAHFQP) and 84-106 (SAASAHPSGPTSSPSEPAYRGSH). Lys-220 is modified (N6-acetyllysine). 2 stretches are compositionally biased toward basic and acidic residues: residues 224 to 249 (KEKVSKGAEGRERPAVEEDSGKDRQK) and 683 to 702 (ERPDCARSREHEAPHGDGEV). Disordered stretches follow at residues 224–273 (KEKV…SCEG), 674–704 (PATKGPGPVERPDCARSREHEAPHGDGEVRQ), 721–758 (GRPDTAYNTNSGRQGRAAPTFKGAGGPRASHALDLESE), 985–1023 (RKPEDRHMELEEAAQEKTPKSTHKPVALTPMAKGTPSSA), and 1038–1299 (TLKT…KALP). Basic and acidic residues predominate over residues 985 to 1003 (RKPEDRHMELEEAAQEKTP). The segment covering 1133–1149 (RPEPPRTFLPGEPPPCS) has biased composition (pro residues). Residues 1210–1224 (ATGQTNSTQGGMQNE) are compositionally biased toward polar residues. Residues 1269-1284 (QEEETQLEESGGDSEV) are compositionally biased toward acidic residues. 2 coiled-coil regions span residues 1346 to 1373 (ALLSELADLETQRQKSELSMQEDEDVLA) and 1437 to 1486 (LKAA…SSRS). Residues 1466 to 1484 (QRELARLQRRHDHEREESS) are compositionally biased toward basic and acidic residues. 8 disordered regions span residues 1466–1520 (QREL…DSKK), 1537–1559 (GDEPPRKRSKLGKSPYTGLQSVS), 1604–1641 (KEAAPGGRIQKKLSRAKSVTASGAARHPHPDGDSGREM), 1746–1781 (RAPGRRPPGAPGKKKAKGKVKTGLRTEPGTATSRDT), 1875–1896 (FDEDDTSFSDEEEEEEEAGVQL), 2055–2124 (SSCR…HFLG), 2322–2341 (CPSSYSDEDEDGPGLATGVP), and 2349–2386 (SMSSSSSGSSTSSSSGSVSTSSLCSSDNEDSSYSSDDE). Basic residues predominate over residues 1487-1501 (PARRGPGRPRKRKHS). The segment covering 1631-1641 (PHPDGDSGREM) has biased composition (basic and acidic residues). The span at 1757–1767 (GKKKAKGKVKT) shows a compositional bias: basic residues. Over residues 1875-1892 (FDEDDTSFSDEEEEEEEA) the composition is skewed to acidic residues. Residues 2349–2374 (SMSSSSSGSSTSSSSGSVSTSSLCSS) show a composition bias toward low complexity. Over residues 2375 to 2386 (DNEDSSYSSDDE) the composition is skewed to acidic residues. The region spanning 2517–2637 (ETLRIGDCAV…PTTGRLVTAD (121 aa)) is the BAH domain.

The polypeptide is BAH and coiled-coil domain-containing protein 1 (Bahcc1) (Mus musculus (Mouse)).